The sequence spans 293 residues: Ribosomal protein L11 methyltransferase (293 aa).

Residues T145, G166, D188, and N230 each contribute to the S-adenosyl-L-methionine site.

The protein belongs to the methyltransferase superfamily. PrmA family.

It is found in the cytoplasm. It catalyses the reaction L-lysyl-[protein] + 3 S-adenosyl-L-methionine = N(6),N(6),N(6)-trimethyl-L-lysyl-[protein] + 3 S-adenosyl-L-homocysteine + 3 H(+). Methylates ribosomal protein L11. The protein is Ribosomal protein L11 methyltransferase of Shewanella baltica (strain OS185).